The sequence spans 1405 residues: DNA-directed RNA polymerase subunit beta' (1405 aa).

4 residues coordinate Zn(2+): Cys-71, Cys-73, Cys-86, and Cys-89. Mg(2+) contacts are provided by Asp-462, Asp-464, and Asp-466. Cys-810, Cys-884, Cys-891, and Cys-894 together coordinate Zn(2+).

This sequence belongs to the RNA polymerase beta' chain family. The RNAP catalytic core consists of 2 alpha, 1 beta, 1 beta' and 1 omega subunit. When a sigma factor is associated with the core the holoenzyme is formed, which can initiate transcription. Mg(2+) is required as a cofactor. It depends on Zn(2+) as a cofactor.

The enzyme catalyses RNA(n) + a ribonucleoside 5'-triphosphate = RNA(n+1) + diphosphate. DNA-dependent RNA polymerase catalyzes the transcription of DNA into RNA using the four ribonucleoside triphosphates as substrates. In Maricaulis maris (strain MCS10) (Caulobacter maris), this protein is DNA-directed RNA polymerase subunit beta'.